The chain runs to 381 residues: NAD-dependent methanol dehydrogenase (381 aa).

This sequence belongs to the iron-containing alcohol dehydrogenase family. Homodecamer. Mg(2+) is required as a cofactor. Zn(2+) serves as cofactor.

It localises to the cytoplasm. The catalysed reaction is methanol + NAD(+) = formaldehyde + NADH + H(+). Its pathway is one-carbon metabolism; methanol degradation; formaldehyde from methanol: step 1/1. With respect to regulation, stimulated by the activator protein Act which requires the presence of magnesium ions. Inhibited by 1,10-phenanthroline. Its function is as follows. Catalyzes the oxidation of methanol to yield formaldehyde. It possesses a NADH-dependent formaldehyde reductase activity and cannot use NADP. The protein is NAD-dependent methanol dehydrogenase of Bacillus methanolicus.